Reading from the N-terminus, the 1324-residue chain is Mediator of RNA polymerase II transcription subunit 13 (1324 aa).

6 disordered regions span residues 296-346, 386-455, 535-590, 607-631, 694-816, and 1151-1198; these read ESGV…PPEA, FFDD…ATTA, GRFF…EPEI, HDDK…SNNS, KGGQ…VPSA, and TGSD…PDIY. Residues 298–331 show a composition bias toward polar residues; it reads GVNTNESTAAQPQPAQNGTNSMAPAAGTTNATTQ. Residues 398-407 are compositionally biased toward acidic residues; the sequence is DGDNDNGNDN. A compositionally biased stretch (basic and acidic residues) spans 408-442; sequence DNDKADAMDVDVKEEAKKEEMIKKETKEEVPVKEE. The span at 546–566 shows a compositional bias: low complexity; sequence DNEGSSDNTGDSSDSGDGSES. Composition is skewed to basic and acidic residues over residues 567-578 and 607-617; these read VPRDVKRQKVDE and HDDKPAKKIDS. 2 stretches are compositionally biased toward low complexity: residues 618–631 and 724–743; these read SNDT…SNNS and SNAS…QMGA. Polar residues predominate over residues 750–784; that stretch reads LSPSRGATPQPEGSSPETRPSNWTPGITSQVNSAA. 2 stretches are compositionally biased toward low complexity: residues 785–816 and 1172–1184; these read SSPV…VPSA and TGAA…GSAP.

Belongs to the Mediator complex subunit 13 family. Component of the SRB8-11 complex, which itself associates with the Mediator complex.

It localises to the nucleus. In terms of biological role, component of the SRB8-11 complex. The SRB8-11 complex is a regulatory module of the Mediator complex which is itself involved in regulation of basal and activated RNA polymerase II-dependent transcription. The SRB8-11 complex may be involved in the transcriptional repression of a subset of genes regulated by Mediator. It may inhibit the association of the Mediator complex with RNA polymerase II to form the holoenzyme complex. This chain is Mediator of RNA polymerase II transcription subunit 13 (SSN2), found in Yarrowia lipolytica (strain CLIB 122 / E 150) (Yeast).